The chain runs to 353 residues: Photosystem II protein D1 (353 aa).

Position 2 is an N-acetylthreonine (Thr-2). Residue Thr-2 is modified to Phosphothreonine. 3 helical membrane-spanning segments follow: residues 29–46 (YIGW…TATS), 118–133 (HFLL…EWEL), and 142–156 (WIAV…AAAA). His-118 provides a ligand contact to chlorophyll a. Tyr-126 is a binding site for pheophytin a. [CaMn4O5] cluster is bound by residues Asp-170 and Glu-189. The helical transmembrane segment at 197 to 218 (FHMLGVAGVFGGSLFSAMHGSL) threads the bilayer. His-198 provides a ligand contact to chlorophyll a. A quinone-binding positions include His-215 and 264-265 (SF). His-215 serves as a coordination point for Fe cation. Residue His-272 participates in Fe cation binding. The helical transmembrane segment at 274–288 (FLAAWPVVGIWFTAL) threads the bilayer. Positions 332, 333, 342, and 344 each coordinate [CaMn4O5] cluster. Positions 345 to 353 (AVEAPSTNG) are excised as a propeptide.

It belongs to the reaction center PufL/M/PsbA/D family. PSII is composed of 1 copy each of membrane proteins PsbA, PsbB, PsbC, PsbD, PsbE, PsbF, PsbH, PsbI, PsbJ, PsbK, PsbL, PsbM, PsbT, PsbX, PsbY, PsbZ, Psb30/Ycf12, at least 3 peripheral proteins of the oxygen-evolving complex and a large number of cofactors. It forms dimeric complexes. The D1/D2 heterodimer binds P680, chlorophylls that are the primary electron donor of PSII, and subsequent electron acceptors. It shares a non-heme iron and each subunit binds pheophytin, quinone, additional chlorophylls, carotenoids and lipids. D1 provides most of the ligands for the Mn4-Ca-O5 cluster of the oxygen-evolving complex (OEC). There is also a Cl(-1) ion associated with D1 and D2, which is required for oxygen evolution. The PSII complex binds additional chlorophylls, carotenoids and specific lipids. is required as a cofactor. Tyr-161 forms a radical intermediate that is referred to as redox-active TyrZ, YZ or Y-Z. In terms of processing, C-terminally processed by CTPA; processing is essential to allow assembly of the oxygen-evolving complex and thus photosynthetic growth.

It is found in the plastid. The protein localises to the chloroplast thylakoid membrane. The catalysed reaction is 2 a plastoquinone + 4 hnu + 2 H2O = 2 a plastoquinol + O2. In terms of biological role, photosystem II (PSII) is a light-driven water:plastoquinone oxidoreductase that uses light energy to abstract electrons from H(2)O, generating O(2) and a proton gradient subsequently used for ATP formation. It consists of a core antenna complex that captures photons, and an electron transfer chain that converts photonic excitation into a charge separation. The D1/D2 (PsbA/PsbD) reaction center heterodimer binds P680, the primary electron donor of PSII as well as several subsequent electron acceptors. The sequence is that of Photosystem II protein D1 from Panax ginseng (Korean ginseng).